The primary structure comprises 406 residues: Putative F-box protein At5g38270 (406 aa).

The F-box domain maps to 20 to 67 (HDWSKLCPDILRSILESLSSTDFHRAKTVCSDWYSNWKTCVKPLCPWR).

The sequence is that of Putative F-box protein At5g38270 from Arabidopsis thaliana (Mouse-ear cress).